The sequence spans 364 residues: N-acetyl-gamma-glutamyl-phosphate reductase (364 aa).

Cys157 is an active-site residue.

The protein belongs to the NAGSA dehydrogenase family. Type 1 subfamily.

It localises to the cytoplasm. It catalyses the reaction N-acetyl-L-glutamate 5-semialdehyde + phosphate + NADP(+) = N-acetyl-L-glutamyl 5-phosphate + NADPH + H(+). Its pathway is amino-acid biosynthesis; L-arginine biosynthesis; N(2)-acetyl-L-ornithine from L-glutamate: step 3/4. Functionally, catalyzes the NADPH-dependent reduction of N-acetyl-5-glutamyl phosphate to yield N-acetyl-L-glutamate 5-semialdehyde. The sequence is that of N-acetyl-gamma-glutamyl-phosphate reductase from Bifidobacterium longum (strain NCC 2705).